Reading from the N-terminus, the 247-residue chain is MTHSTLPPRPFAILAMRRTGTHYLEELVNEHPNVLSNGELLNTYDTNWPDKERLLLSDRELLERACWRYPPHSDKKVTHVGCKINEPQFQERPSFFAELTAWPGLKVILVIRRNTLESLRSFVQARQTRQWLQFKSDSSAPPPPVMLPFATCEAYFKAADDFHARVVNAFDSSRIRLIEYERLLRDPVPCVATVLDFLGAPALQLADRGILRRQETRPLDQTVRNFHELRVHFANGPYARFFELAND.

A hydrophobic region spans residues 1–16 (MTHSTLPPRPFAILAM).

Functionally, required for the formation of sulfated nod factor. Proposed to transfer activated sulfate (PAPS) to a N-acetylglucosamine of the nod factor. The sequence is that of Nodulation protein H (nodH) from Rhizobium meliloti (Ensifer meliloti).